The primary structure comprises 1093 residues: Synaptopodin-2 (1093 aa).

The segment at 1–180 (MGTGDFICIS…PDSQRGRVAE (180 aa)) is interaction with VPS18. The region spanning 6-88 (FICISMTGGA…SLQMLIKRPS (83 aa)) is the PDZ domain. Disordered stretches follow at residues 144–174 (ENQR…PDSQ) and 211–233 (ASGP…DPNL). The segment covering 222 to 233 (EKSKSPDPDPNL) has biased composition (basic and acidic residues). 4 positions are modified to phosphoserine: serine 274, serine 310, serine 329, and serine 330. The segment at 329–369 (SSEGTEQGEDPRSEKDHSRPHKHRARHARLRRSESLSEKQV) is disordered. Threonine 333 carries the post-translational modification Phosphothreonine. Basic residues predominate over residues 346–358 (SRPHKHRARHARL). The segment covering 359 to 369 (RRSESLSEKQV) has biased composition (basic and acidic residues). The short motif at 398–406 (KKRRRRARK) is the Nuclear localization signal element. 3 interaction with ACTN2 regions span residues 481 to 663 (MEML…FYDS), 664 to 924 (SERI…PPVA), and 901 to 1093 (QSPT…VVEE). 2 disordered regions span residues 507-803 (AQKE…GTVV) and 834-870 (AVAS…GMSG). F-actin binding regions lie at residues 534–663 (TSYQ…FYDS) and 664–803 (SERI…GTVV). Serine 548, serine 549, and serine 551 each carry phosphoserine. Composition is skewed to polar residues over residues 565 to 579 (PQQN…TANI) and 595 to 611 (SVNQ…NMTS). Serine 604 is modified (phosphoserine). Positions 607-811 (RNMTSPIADF…VVSSIKIAQP (205 aa)) are interaction with YWHAB. The residue at position 610 (threonine 610) is a Phosphothreonine. Position 611 is a phosphoserine (serine 611). Residues 615–626 (DFPAPPPYSAVT) form an interaction with BAG3 region. Pro residues-rich tracts occupy residues 617–630 (PAPP…PPPD) and 644–655 (AQPPPWPQPAPW). Positions 619–622 (PPPY) match the PPPY motif motif. Tyrosine 622 carries the phosphotyrosine modification. Threonine 626 carries the post-translational modification Phosphothreonine. Residues 663 to 674 (SSERIASRDERI) show a composition bias toward basic and acidic residues. The F-actin bundling activity stretch occupies residues 664-916 (SERIASRDER…LPASWKYSSN (253 aa)). Phosphoserine is present on residues serine 705 and serine 729. The interval 751–900 (AKQKTPPPVA…DTVQAHAARA (150 aa)) is actin binding. 2 positions are modified to phosphothreonine: threonine 755 and threonine 774. A compositionally biased stretch (low complexity) spans 762–784 (KPAVKSSSSQPVTPVSPVWSPGV). Serine 777 and serine 781 each carry phosphoserine. 2 stretches are compositionally biased toward polar residues: residues 793 to 803 (PTSNPSKGTVV) and 835 to 853 (VASQ…TVNA). The interaction with FLNC stretch occupies residues 810-1093 (QPSYPPARPA…QVWKPSVVEE (284 aa)). Phosphoserine is present on residues serine 902, serine 906, and serine 910. The interval 937–956 (ALKSQPSAAQPSKMGKKKGK) is disordered. The tract at residues 1000 to 1019 (LAMKQALPPRPVNAASPTNV) is interaction with ZYX. Residue serine 1015 is modified to Phosphoserine. Positions 1041 to 1050 (SSPVSASPVP) are enriched in low complexity. The interval 1041–1064 (SSPVSASPVPVGIPTSPKQESASS) is disordered. At serine 1056 the chain carries Phosphoserine.

Belongs to the synaptopodin family. In terms of assembly, may self-associate in muscle cells under oxidative stress. Binds F-actin. Interacts with ACTN2; ACTN2 is proposed to anchor SYOP2 at Z lines in mature myocytes. Interacts with AKAP6, PPP3CA and CAMK2A. Interacts (phosphorylated form) with YWHAB; YWHAB competes with ACTN2 for interaction with SYNPO2. Interacts with KPNA2; mediating nuclear import of SYNOP2; dependent on interaction with YWHAB. Interacts with IPO13; may be implicated in SYNOP2 nuclear import. Interacts with ZYX, FLNC, ILK. Interacts with BAG3 (via WW 1 domain). May associate with the CASA complex consisting of HSPA8, HSPB8 and BAG3. Interacts with VPS18. Post-translationally, phosphorylated by PKA, and by CaMK2 at multiple sites. Dephosphorylated by calcineurin; abrogating interaction with YWHAB and impairing nuclear import. Phosphorylated by ILK. As to expression, expressed in heart muscle. Isoform 5 is specifically expressed in skeletal muscle.

The protein resides in the nucleus. The protein localises to the cytoplasm. It localises to the cytoskeleton. It is found in the myofibril. Its subcellular location is the sarcomere. The protein resides in the z line. The protein localises to the cell junction. It localises to the focal adhesion. Functionally, has an actin-binding and actin-bundling activity. Can induce the formation of F-actin networks in an isoform-specific manner. At the sarcomeric Z lines is proposed to act as adapter protein that links nascent myofibers to the sarcolemma via ZYX and may play a role in early assembly and stabilization of the Z lines. Involved in autophagosome formation. May play a role in chaperone-assisted selective autophagy (CASA) involved in Z lines maintenance in striated muscle under mechanical tension; may link the client-processing CASA chaperone machinery to a membrane-tethering and fusion complex providing autophagosome membranes. Involved in regulation of cell migration. May be a tumor suppressor. In terms of biological role, involved in regulation of cell migration. Can induce formation of thick, irregular actin bundles in the cell body. Involved in regulation of cell migration. Can induce long, well-organized actin bundles frequently orientated in parallel along the long axis of the cell showing characteristics of contractile ventral stress fibers. Its function is as follows. Involved in regulation of cell migration. Can induce an amorphous actin meshwork throughout the cell body containing a mixture of long and short, randomly organized thick and thin actin bundles. Functionally, can induce long, well-organized actin bundles frequently orientated in parallel along the long axis of the cell showing characteristics of contractile ventral stress fibers. In terms of biological role, involved in regulation of cell migration in part dependent on the Rho-ROCK cascade; can promote formation of nascent focal adhesions, actin bundles at the leading cell edge and lamellipodia. Can induce formation of thick, irregular actin bundles in the cell body; the induced actin network is associated with enhanced cell migration in vitro. This Homo sapiens (Human) protein is Synaptopodin-2 (SYNPO2).